Reading from the N-terminus, the 105-residue chain is Large ribosomal subunit protein uL24 (105 aa).

Belongs to the universal ribosomal protein uL24 family. In terms of assembly, part of the 50S ribosomal subunit.

One of two assembly initiator proteins, it binds directly to the 5'-end of the 23S rRNA, where it nucleates assembly of the 50S subunit. Functionally, one of the proteins that surrounds the polypeptide exit tunnel on the outside of the subunit. This Vibrio atlanticus (strain LGP32) (Vibrio splendidus (strain Mel32)) protein is Large ribosomal subunit protein uL24.